We begin with the raw amino-acid sequence, 517 residues long: Crotonobetaine/carnitine--CoA ligase (517 aa).

This sequence belongs to the ATP-dependent AMP-binding enzyme family.

It carries out the reaction 4-(trimethylamino)butanoate + ATP + CoA = 4-(trimethylamino)butanoyl-CoA + AMP + diphosphate. It catalyses the reaction crotonobetaine + ATP + CoA = crotonobetainyl-CoA + AMP + diphosphate. The enzyme catalyses (R)-carnitine + ATP + CoA = (R)-carnitinyl-CoA + AMP + diphosphate. Its pathway is amine and polyamine metabolism; carnitine metabolism. In terms of biological role, catalyzes the transfer of CoA to carnitine, generating the initial carnitinyl-CoA needed for the CaiB reaction cycle. Also has activity toward crotonobetaine and gamma-butyrobetaine. The chain is Crotonobetaine/carnitine--CoA ligase from Escherichia coli O139:H28 (strain E24377A / ETEC).